Reading from the N-terminus, the 265-residue chain is Hydroxyethylthiazole kinase (265 aa).

Methionine 36 is a binding site for substrate. The ATP site is built by lysine 112 and serine 160. Glycine 187 contributes to the substrate binding site.

The protein belongs to the Thz kinase family. Requires Mg(2+) as cofactor.

It catalyses the reaction 5-(2-hydroxyethyl)-4-methylthiazole + ATP = 4-methyl-5-(2-phosphooxyethyl)-thiazole + ADP + H(+). Its pathway is cofactor biosynthesis; thiamine diphosphate biosynthesis; 4-methyl-5-(2-phosphoethyl)-thiazole from 5-(2-hydroxyethyl)-4-methylthiazole: step 1/1. Its function is as follows. Catalyzes the phosphorylation of the hydroxyl group of 4-methyl-5-beta-hydroxyethylthiazole (THZ). This is Hydroxyethylthiazole kinase from Clostridium perfringens (strain SM101 / Type A).